We begin with the raw amino-acid sequence, 290 residues long: Fructokinase (290 aa).

Threonine 130 is a binding site for ATP. Residues histidine 153, cysteine 169, histidine 172, and cysteine 175 each coordinate Zn(2+). ATP contacts are provided by residues proline 183 and 231 to 235 (GVMEK).

This sequence belongs to the ROK (NagC/XylR) family. Homodimer. The cofactor is Mg(2+).

The enzyme catalyses D-fructose + ATP = D-fructose 6-phosphate + ADP + H(+). With respect to regulation, inactivated by EDTA. Inhibition by zinc ions (Potential). This Lactococcus lactis subsp. cremoris (Streptococcus cremoris) protein is Fructokinase (scrK).